Reading from the N-terminus, the 590-residue chain is Arginine--tRNA ligase, cytoplasmic (590 aa).

A2 is subject to N-acetylalanine. Residues 137 to 139 (SPN), H148, Y322, D326, and Q350 contribute to the L-arginine site. The 'HIGH' region signature appears at 138–149 (PNIAKEMHVGHL). The interaction with tRNA stretch occupies residues 470-484 (DTAVYLLYAHARICS).

Belongs to the class-I aminoacyl-tRNA synthetase family.

It is found in the cytoplasm. It localises to the cytosol. The enzyme catalyses tRNA(Arg) + L-arginine + ATP = L-arginyl-tRNA(Arg) + AMP + diphosphate. In terms of biological role, forms part of a macromolecular complex that catalyzes the attachment of specific amino acids to cognate tRNAs during protein synthesis. The polypeptide is Arginine--tRNA ligase, cytoplasmic (Arabidopsis thaliana (Mouse-ear cress)).